A 436-amino-acid chain; its full sequence is Calcium/calmodulin-regulated receptor-like kinase 2 (436 aa).

The helical transmembrane segment at 7–34 (LVVIGISVGLALGLLLALLLFFAIKWYY) threads the bilayer. Positions 65 to 88 (DRANTESSQPPENGAPTQHQPWWN) are disordered. The span at 69-88 (TESSQPPENGAPTQHQPWWN) shows a compositional bias: polar residues. In terms of domain architecture, Protein kinase spans 114–375 (QNFTTVLGQG…PSIGEVTQFI (262 aa)). ATP is bound by residues 120–128 (LGQGSFGPV) and Lys142. Position 187 is a phosphotyrosine (Tyr187). Asp239 acts as the Proton acceptor in catalysis. A Phosphothreonine modification is found at Thr276. Tyr284 is modified (phosphotyrosine).

This sequence belongs to the protein kinase superfamily. Ser/Thr protein kinase family.

Its subcellular location is the cell membrane. It carries out the reaction L-seryl-[protein] + ATP = O-phospho-L-seryl-[protein] + ADP + H(+). The catalysed reaction is L-threonyl-[protein] + ATP = O-phospho-L-threonyl-[protein] + ADP + H(+). The chain is Calcium/calmodulin-regulated receptor-like kinase 2 from Arabidopsis thaliana (Mouse-ear cress).